The sequence spans 510 residues: Aspartate kinase FUB3 (510 aa).

ACT domains follow at residues 372-440 and 446-510; these read ILSN…VLPD and LVGA…KNAI.

The protein belongs to the aspartokinase family.

It carries out the reaction L-aspartate + ATP = 4-phospho-L-aspartate + ADP. Its pathway is mycotoxin biosynthesis. Its function is as follows. Aspartate kinase; part of the gene cluster that mediates the biosynthesis of fusaric acid, a mycotoxin with low to moderate toxicity to animals and humans, but with high phytotoxic properties. L-aspartate is suggested as fusaric acid amino acid precursor that is activated and further processed to O-acetyl-L-homoserine by cluster enzymes aspartate kinase FUB3 and homoserine O-acetyltransferase FUB5, as well as enzymes of the primary metabolism. The polyketide synthase (PKS) FUB1 generates the triketide trans-2-hexenal which is presumptively released by the hydrolase FUB4 and linked to the NRPS-bound amino acid precursor by NAD(P)-dependent dehydrogenase FUB6. FUB1, FUB4, and the non-canonical NRPS Fub8 may form an enzyme complex. Further processing of the NRPS-bound intermediate might be carried out by FUB6 and the sulfhydrylase FUB7, enabling a spontaneous electrocyclization to close the carbon backbone of fusaric acid. Dihydrofusaric acid is likely to be released via reduction by the thioester reductase (TR) domain of FUB8 whereupon the final oxidation to fusaric acid may (also) be performed by the FMN-dependent dehydrogenase FUB9. The protein is Aspartate kinase FUB3 of Gibberella fujikuroi (strain CBS 195.34 / IMI 58289 / NRRL A-6831) (Bakanae and foot rot disease fungus).